The chain runs to 407 residues: MSHRKFSAPRHGHLGFLPHKRSRRHRGKVKSWPRDDPSQPVHLTAFLGYKAGMTHTLREVHRPGLKISKREEVEAVTIVETPPLVVVGVVGYVATPRGLRSFKTIFAEHLSDECRRRFYKDWHKSKKKAFTKACKRWRDADGKKQLQKDFAAMKKYCKVIRVIVHTQMKLLPFRQKKAHIMEIQLNGGTVAEKVAWVQARMEKQVPVHSVFSQSEVIDVIAVTKGRGVKGVTSRWHTKKLPRKTHKGLRKVACIGAWHPARVGCSIARAGQKGYHHRTELNKKIYRIGRGLHMEDGKMVRNNASTSYDVTDKSITPLGGFPHYGEVNNDFIMLKGCIAGTKKRVITLRKSLLVHHSRRALENIELKFIDTTSKFGHGCFQTAQEKRAFMGPQKKHLEKEKPETLGNM.

Residues 1–31 (MSHRKFSAPRHGHLGFLPHKRSRRHRGKVKS) are compositionally biased toward basic residues. Residues 1–37 (MSHRKFSAPRHGHLGFLPHKRSRRHRGKVKSWPRDDP) are disordered.

This sequence belongs to the universal ribosomal protein uL3 family. In terms of assembly, component of the large ribosomal subunit (LSU). Part of a LSU subcomplex, the 5S RNP which is composed of the 5S RNA, RPL5 and RPL11. Interacts with NVL in an ATP-dependent manner. Interacts with RRP1B. Interacts with IPO5, IPO7 and KPNB1; these interactions may be involved in RPL5 nuclear import for the assembly of ribosomal subunits. Interacts with RRP1B. In terms of tissue distribution, expression is restricted to striated muscles.

Its function is as follows. Heart- and skeletal muscle-specific component of the ribosome, which regulates muscle function. Component of the large ribosomal subunit in striated muscle cells: replaces the RPL3 paralog in the ribosome in these cells. The ribosome is a large ribonucleoprotein complex responsible for the synthesis of proteins in the cell. Inhibits myotube growth and muscle function. The chain is Large ribosomal subunit protein uL3-like from Mus musculus (Mouse).